The chain runs to 154 residues: Probable archaeosortase D (154 aa).

The next 4 helical transmembrane spans lie at 6-26, 57-77, 91-111, and 125-145; these read AIYILRFLIYFFIFYYILKML, IIEISSPCTCSLEMALFLGYI, YSVFGLSIITISNILRIILII, and VISFIIFPIALFLNWFWIYLL. Cysteine 64 (acyl-thioester intermediate) is an active-site residue. The Proton donor role is filled by arginine 106.

This sequence belongs to the exosortase/archaeosortase family. Archaeosortase D subfamily.

The protein resides in the cell membrane. In terms of biological role, transpeptidase that recognizes and modifies its substrate by proteolytic cleavage of a sorting signal. Following cleavage, a covalent intermediate is formed via a thioester bond between the archaeosortase and its substrate, which is then transferred and covalently attached to the cell membrane. The chain is Probable archaeosortase D from Methanocaldococcus jannaschii (strain ATCC 43067 / DSM 2661 / JAL-1 / JCM 10045 / NBRC 100440) (Methanococcus jannaschii).